Reading from the N-terminus, the 154-residue chain is 3-hydroxyacyl-[acyl-carrier-protein] dehydratase FabZ (154 aa).

The active site involves His-57.

This sequence belongs to the thioester dehydratase family. FabZ subfamily.

The protein localises to the cytoplasm. It carries out the reaction a (3R)-hydroxyacyl-[ACP] = a (2E)-enoyl-[ACP] + H2O. Functionally, involved in unsaturated fatty acids biosynthesis. Catalyzes the dehydration of short chain beta-hydroxyacyl-ACPs and long chain saturated and unsaturated beta-hydroxyacyl-ACPs. The protein is 3-hydroxyacyl-[acyl-carrier-protein] dehydratase FabZ of Sinorhizobium fredii (strain NBRC 101917 / NGR234).